Consider the following 673-residue polypeptide: Clotting factor G alpha subunit (673 aa).

The N-terminal stretch at methionine 1–cysteine 19 is a signal peptide. In terms of domain architecture, GH16 spans leucine 27–threonine 257. The active-site Nucleophile is the glutamate 137. Glutamate 142 (proton donor) is an active-site residue. An N-linked (GlcNAc...) asparagine glycan is attached at asparagine 186. One can recognise a Ricin B-type lectin domain in the interval leucine 266–isoleucine 404. 2 consecutive CBM6 domains span residues lysine 411 to threonine 533 and lysine 549 to threonine 671.

It belongs to the glycosyl hydrolase 16 family. In terms of assembly, clotting factor G is a heterodimer composed of two non-covalently associated subunits, alpha and beta. In presence of (1-&gt;3)-beta-glucan, proteolytically cleaved into a 55kDa and a 17kDa forms. Expressed in hemocytes (at protein level).

Component of the heterodimer clotting factor G which may play a role in defense mechanisms against fungi. Initiates a (1-&gt;3)-beta-glucan-sensing clotting pathway whereby the alpha subunit binds to glucans containing (1-&gt;3)-beta linkages, which are components of the fungal cell wall, and the beta subunit catalyzes the activation of proclotting enzyme. In Tachypleus tridentatus (Japanese horseshoe crab), this protein is Clotting factor G alpha subunit.